The following is a 189-amino-acid chain: Flavin prenyltransferase UbiX (189 aa).

FMN-binding positions include G10–S12, S37, S88–T91, and R123. Residues Y153 and R169 each contribute to the dimethylallyl phosphate site.

It belongs to the UbiX/PAD1 family.

It catalyses the reaction dimethylallyl phosphate + FMNH2 = prenylated FMNH2 + phosphate. It functions in the pathway cofactor biosynthesis; ubiquinone biosynthesis. Functionally, flavin prenyltransferase that catalyzes the synthesis of the prenylated FMN cofactor (prenyl-FMN) for 4-hydroxy-3-polyprenylbenzoic acid decarboxylase UbiD. The prenyltransferase is metal-independent and links a dimethylallyl moiety from dimethylallyl monophosphate (DMAP) to the flavin N5 and C6 atoms of FMN. The polypeptide is Flavin prenyltransferase UbiX (Salmonella typhi).